The following is a 357-amino-acid chain: Geranylgeranyl pyrophosphate synthase, chloroplastic (357 aa).

The N-terminal 40 residues, 1 to 40, are a transit peptide targeting the chloroplast; that stretch reads MRSNLCHPLKNQLPISFFLSGTIRKPIFSCSRLSISAIIT. Residues Lys-106, Arg-109, and His-138 each coordinate isopentenyl diphosphate. Asp-145 and Asp-151 together coordinate Mg(2+). Arg-156 is a dimethylallyl diphosphate binding site. An isopentenyl diphosphate-binding site is contributed by Arg-157. Residues Lys-242, Thr-243, Gln-280, Lys-297, and Lys-307 each contribute to the dimethylallyl diphosphate site.

Belongs to the FPP/GGPP synthase family. Requires Mg(2+) as cofactor.

The protein resides in the plastid. It is found in the chloroplast. The catalysed reaction is isopentenyl diphosphate + dimethylallyl diphosphate = (2E)-geranyl diphosphate + diphosphate. It catalyses the reaction isopentenyl diphosphate + (2E)-geranyl diphosphate = (2E,6E)-farnesyl diphosphate + diphosphate. The enzyme catalyses isopentenyl diphosphate + (2E,6E)-farnesyl diphosphate = (2E,6E,10E)-geranylgeranyl diphosphate + diphosphate. It functions in the pathway isoprenoid biosynthesis; farnesyl diphosphate biosynthesis; farnesyl diphosphate from geranyl diphosphate and isopentenyl diphosphate: step 1/1. Its pathway is isoprenoid biosynthesis; geranyl diphosphate biosynthesis; geranyl diphosphate from dimethylallyl diphosphate and isopentenyl diphosphate: step 1/1. The protein operates within isoprenoid biosynthesis; geranylgeranyl diphosphate biosynthesis; geranylgeranyl diphosphate from farnesyl diphosphate and isopentenyl diphosphate: step 1/1. Its function is as follows. Catalyzes the trans-addition of the three molecules of IPP onto DMAPP to form geranylgeranyl pyrophosphate. The chain is Geranylgeranyl pyrophosphate synthase, chloroplastic (GGPS1) from Catharanthus roseus (Madagascar periwinkle).